The following is a 120-amino-acid chain: Aspartate 1-decarboxylase (120 aa).

Ser-25 serves as the catalytic Schiff-base intermediate with substrate; via pyruvic acid. Ser-25 carries the post-translational modification Pyruvic acid (Ser). Thr-57 serves as a coordination point for substrate. The active-site Proton donor is the Tyr-58. Position 73 to 75 (Gly-73 to Ala-75) interacts with substrate.

It belongs to the PanD family. In terms of assembly, heterooctamer of four alpha and four beta subunits. It depends on pyruvate as a cofactor. In terms of processing, is synthesized initially as an inactive proenzyme, which is activated by self-cleavage at a specific serine bond to produce a beta-subunit with a hydroxyl group at its C-terminus and an alpha-subunit with a pyruvoyl group at its N-terminus.

The protein resides in the cytoplasm. The catalysed reaction is L-aspartate + H(+) = beta-alanine + CO2. Its pathway is cofactor biosynthesis; (R)-pantothenate biosynthesis; beta-alanine from L-aspartate: step 1/1. Catalyzes the pyruvoyl-dependent decarboxylation of aspartate to produce beta-alanine. The chain is Aspartate 1-decarboxylase from Thermosipho africanus (strain TCF52B).